The chain runs to 918 residues: E3 ubiquitin-protein ligase CBL-B-A (918 aa).

A compositionally biased stretch (low complexity) spans 1–18; the sequence is MASGSGSSSSTSSSALSG. The disordered stretch occupies residues 1–27; the sequence is MASGSGSSSSTSSSALSGRLPGSRSAN. The segment at 46-178 is 4H; that stretch reads PPKQAAADRR…KAIFPSGQFQ (133 aa). The Cbl-PTB domain occupies 46–354; the sequence is PPKQAAADRR…GRSYNPDLTG (309 aa). The segment at 179 to 251 is EF-hand-like; that stretch reads GDNFRITKAD…FEFDIFTRLF (73 aa). Asp-232, Thr-234, Asn-236, Tyr-238, and Glu-243 together coordinate Ca(2+). The segment at 252-354 is SH2-like; it reads QPWGSILRNW…GRSYNPDLTG (103 aa). A 4-O-phospho-L-tyrosine-binding site is contributed by Arg-297. Positions 355 to 383 are linker; that stretch reads LCEPTPHDHIKVTQEQYELYCEMGSTFQL. The RING-type zinc-finger motif lies at 384 to 423; that stretch reads CKICAENDKDVKIEPCGHLMCTSCLTSWQESDGQGCPFCR. Disordered stretches follow at residues 481 to 582, 780 to 831, and 857 to 918; these read NERQ…RTCR, FPPA…PPAR, and HSDP…MRPT. Residues 483–497 are compositionally biased toward polar residues; sequence RQNSPVTSPGSSPLS. 2 stretches are compositionally biased toward pro residues: residues 554–576 and 821–830; these read LPAPPPLLREPPPPPERPPPIPP and PSQPPPPPPA. Residues 898–918 show a composition bias toward polar residues; it reads KASNTKGELLLPNQNLIMRPT.

In terms of assembly, interacts with several SH3 domain-containing proteins and with poly-ubiquitinated proteins.

Its subcellular location is the cytoplasm. The enzyme catalyses S-ubiquitinyl-[E2 ubiquitin-conjugating enzyme]-L-cysteine + [acceptor protein]-L-lysine = [E2 ubiquitin-conjugating enzyme]-L-cysteine + N(6)-ubiquitinyl-[acceptor protein]-L-lysine.. The protein operates within protein modification; protein ubiquitination. Its function is as follows. E3 ubiquitin-protein ligase which accepts ubiquitin from specific E2 ubiquitin-conjugating enzymes, and transfers it to substrates, generally promoting their degradation by the proteasome. The protein is E3 ubiquitin-protein ligase CBL-B-A (cblb-a) of Xenopus laevis (African clawed frog).